Consider the following 95-residue polypeptide: MNMTINEDALNWYKEELDLESGDQVRFFVRYGGCSNVQKGFSLGVAKDAPQEAGVTAEADGITFFIEESDLWYFDNHDLLVSYSEDADEPVFEYQ.

The protein belongs to the HesB/IscA family. In terms of assembly, interacts with the E1 module of pyruvate dehydrogenase (PdhA-PdhB).

Its function is as follows. Acts as an inhibitor of the pyruvate dehydrogenase. Overexpression does not affect growth with glucose as the main carbon source, but it leads to a dramatic growth defect when cells are grown with pyruvate as the sole carbon source. This is Pyruvate dehydrogenase inhibitor from Bacillus subtilis (strain 168).